A 173-amino-acid chain; its full sequence is Alpha-crystallin A chain (173 aa).

Position 1 is an N-acetylmethionine (Met1). Residues 1 to 63 (MDVTIQHPWF…RTVLDSGISE (63 aa)) form a required for complex formation with BFSP1 and BFSP2 region. Deamidated glutamine; partial is present on Gln6. The residue at position 45 (Ser45) is a Phosphoserine. At Gln50 the chain carries Deamidated glutamine; partial. Residues 52 to 162 (LFRTVLDSGI…GHSERAIPVS (111 aa)) form the sHSP domain. N6-acetyllysine is present on Lys70. Gln90 is modified (deamidated glutamine; partial). Lys99 carries the post-translational modification N6-acetyllysine. His100 contributes to the Zn(2+) binding site. Asn101 is subject to Deamidated asparagine; partial. Positions 102 and 107 each coordinate Zn(2+). Ser122 carries the post-translational modification Phosphoserine. Deamidated asparagine; partial is present on Asn123. Residues 145 to 173 (KVQSGLDAGHSERAIPVSREEKPSSAPSS) are disordered. The residue at position 147 (Gln147) is a Deamidated glutamine; partial. The segment covering 153–167 (GHSERAIPVSREEKP) has biased composition (basic and acidic residues). His154 is a binding site for Zn(2+). An O-linked (GlcNAc) serine glycan is attached at Ser162.

Belongs to the small heat shock protein (HSP20) family. As to quaternary structure, heteromer composed of three CRYAA and one CRYAB subunits. Inter-subunit bridging via zinc ions enhances stability, which is crucial as there is no protein turn over in the lens. Can also form homodimers and homotetramers (dimers of dimers) which serve as the building blocks of homooligomers. Within homooligomers, the zinc-binding motif is created from residues of 3 different molecules. His-100 and Glu-102 from one molecule are ligands of the zinc ion, and His-107 and His-154 residues from additional molecules complete the site with tetrahedral coordination geometry. Part of a complex required for lens intermediate filament formation composed of BFSP1, BFSP2 and CRYAA. Post-translationally, acetylation at Lys-70 may increase chaperone activity. In terms of processing, undergoes age-dependent proteolytical cleavage at the C-terminus.

It localises to the cytoplasm. The protein resides in the nucleus. In terms of biological role, contributes to the transparency and refractive index of the lens. Acts as a chaperone, preventing aggregation of various proteins under a wide range of stress conditions. Required for the correct formation of lens intermediate filaments as part of a complex composed of BFSP1, BFSP2 and CRYAA. This chain is Alpha-crystallin A chain (CRYAA), found in Cavia porcellus (Guinea pig).